The primary structure comprises 236 residues: MTIYLTELDTTSIEFPSPFDALDEPNGLLAFGGDLSPIRILNAYSQGIFPWYGPGEPILWWSPAPRAVFNPKTFEPSKSLKKFQRKHNYRVSINQATDRVIGYCSSLRPEEETWLNNDMQAAYRELASLGFCHSVEVWQGDELIGGLYGLQRGQVFCGESMFSLKTNASKIALWYFCEHFTQFGGQLIDCQVMNPHLESLGAIEVDRDEFLSSLRLLKETSVNDACSKKQWLKEMP.

It belongs to the L/F-transferase family.

Its subcellular location is the cytoplasm. It catalyses the reaction N-terminal L-lysyl-[protein] + L-leucyl-tRNA(Leu) = N-terminal L-leucyl-L-lysyl-[protein] + tRNA(Leu) + H(+). It carries out the reaction N-terminal L-arginyl-[protein] + L-leucyl-tRNA(Leu) = N-terminal L-leucyl-L-arginyl-[protein] + tRNA(Leu) + H(+). The catalysed reaction is L-phenylalanyl-tRNA(Phe) + an N-terminal L-alpha-aminoacyl-[protein] = an N-terminal L-phenylalanyl-L-alpha-aminoacyl-[protein] + tRNA(Phe). In terms of biological role, functions in the N-end rule pathway of protein degradation where it conjugates Leu, Phe and, less efficiently, Met from aminoacyl-tRNAs to the N-termini of proteins containing an N-terminal arginine or lysine. The protein is Leucyl/phenylalanyl-tRNA--protein transferase of Vibrio atlanticus (strain LGP32) (Vibrio splendidus (strain Mel32)).